Consider the following 441-residue polypeptide: UDP-N-acetylglucosamine--N-acetylmuramyl-(pentapeptide) pyrophosphoryl-undecaprenol N-acetylglucosamine transferase (441 aa).

UDP-N-acetyl-alpha-D-glucosamine is bound by residues 28-30 (TGG), Asn140, Arg176, Ser204, Ile257, and Gln302.

The protein belongs to the glycosyltransferase 28 family. MurG subfamily.

The protein resides in the cell inner membrane. The enzyme catalyses di-trans,octa-cis-undecaprenyl diphospho-N-acetyl-alpha-D-muramoyl-L-alanyl-D-glutamyl-meso-2,6-diaminopimeloyl-D-alanyl-D-alanine + UDP-N-acetyl-alpha-D-glucosamine = di-trans,octa-cis-undecaprenyl diphospho-[N-acetyl-alpha-D-glucosaminyl-(1-&gt;4)]-N-acetyl-alpha-D-muramoyl-L-alanyl-D-glutamyl-meso-2,6-diaminopimeloyl-D-alanyl-D-alanine + UDP + H(+). It participates in cell wall biogenesis; peptidoglycan biosynthesis. Functionally, cell wall formation. Catalyzes the transfer of a GlcNAc subunit on undecaprenyl-pyrophosphoryl-MurNAc-pentapeptide (lipid intermediate I) to form undecaprenyl-pyrophosphoryl-MurNAc-(pentapeptide)GlcNAc (lipid intermediate II). This chain is UDP-N-acetylglucosamine--N-acetylmuramyl-(pentapeptide) pyrophosphoryl-undecaprenol N-acetylglucosamine transferase, found in Xanthomonas oryzae pv. oryzae (strain KACC10331 / KXO85).